Here is a 738-residue protein sequence, read N- to C-terminus: Wall-associated receptor kinase 4 (738 aa).

The N-terminal stretch at 1–22 is a signal peptide; the sequence is MKVQRLFLVAIFCLSYMQLVKG. Residues 23–335 lie on the Extracellular side of the membrane; that stretch reads QTLPRCPEKC…PKGNPEYVEW (313 aa). N-linked (GlcNAc...) asparagine glycosylation is found at Asn-34, Asn-56, Asn-109, Asn-115, Asn-132, Asn-182, and Asn-208. Residues 232-278 form the EGF-like 1 domain; sequence RGETCGQVGEKKCGVNGICSNSASGIGYTCKCKGGFQGNPYLQNGCQ. 6 disulfide bridges follow: Cys-236/Cys-250, Cys-244/Cys-261, Cys-263/Cys-277, Cys-283/Cys-300, Cys-294/Cys-309, and Cys-311/Cys-324. Residues 279 to 325 form the EGF-like 2; calcium-binding domain; sequence DINECTTANPIHKHNCSGDSTCENKLGHFRCNCRSRYELNTTTNTCK. The N-linked (GlcNAc...) asparagine glycan is linked to Asn-293. A glycan (N-linked (GlcNAc...) asparagine) is linked at Asn-318. A helical transmembrane segment spans residues 336–356; the sequence is TTIVLGTTIGFLVILLAISCI. Topologically, residues 357 to 738 are cytoplasmic; that stretch reads EHKMKNTKDT…VAILDIEAGR (382 aa). Thr-399 carries the phosphothreonine modification. Residues 410-693 enclose the Protein kinase domain; the sequence is YDENRILGQG…RVTKTKHKWS (284 aa). ATP contacts are provided by residues 416 to 424 and Lys-438; that span reads LGQGGQGTV. Position 483 is a phosphotyrosine (Tyr-483). The active-site Proton acceptor is the Asp-535. A phosphothreonine mark is found at Thr-569 and Thr-574. Tyr-582 bears the Phosphotyrosine mark.

The protein belongs to the protein kinase superfamily. Ser/Thr protein kinase family. As to expression, strictly expressed in siliques.

The protein resides in the membrane. The catalysed reaction is L-seryl-[protein] + ATP = O-phospho-L-seryl-[protein] + ADP + H(+). It carries out the reaction L-threonyl-[protein] + ATP = O-phospho-L-threonyl-[protein] + ADP + H(+). In terms of biological role, serine/threonine-protein kinase that may function as a signaling receptor of extracellular matrix component. Binding to pectin may have significance in the control of cell expansion, morphogenesis and development. In Arabidopsis thaliana (Mouse-ear cress), this protein is Wall-associated receptor kinase 4 (WAK4).